The following is a 535-amino-acid chain: Pyrichalasin C-18 hydroxylase (535 aa).

A helical membrane pass occupies residues 42-62 (LPSGTLIVLAALSLALLVAVL). Asn-139 and Asn-222 each carry an N-linked (GlcNAc...) asparagine glycan. Cys-479 is a binding site for heme.

The protein belongs to the cytochrome P450 family. Heme is required as a cofactor.

The protein resides in the membrane. Its pathway is mycotoxin biosynthesis. Cytochrome P450 monooxygenase; part of the gene cluster that mediates the biosynthesis of the mycotoxin pyrichalasin H, a tyrosine-derived cytochalasan that inhibits the growth of rice seedlings, but also inhibits lymphocyte capping and actin polymerization and alters cell morphology. Pyrichalasin H is indicated as the responsible agent for the genus-specific pathogenicity of M.grisea toward crabgrass. The first step in the pathway is catalyzed by the O-methyltransferase pyiA which methylates free tyrosine to generate the precursor O-methyltyrosine. The hybrid PKS-NRPS pyiS, assisted by the enoyl reductase pyiC, are responsible for fusion of the O-methyltyrosine precursor and the polyketide backbone. The polyketide synthase module (PKS) of pyiS is responsible for the synthesis of the polyketide backbone and the downstream nonribosomal peptide synthetase (NRPS) amidates the carboxyl end of the polyketide with the O-methyltyrosine precursor. As the NRPS A-domain demonstrates substrate tolerance, pyiS can also use phenylalanine, tyrosine and even para-chlorophenylalanine as amino acid precursor, which leads to the production of novel cytochalasans, including halogenated cytochalasans. Because pyiS lacks a designated enoylreductase (ER) domain, the required activity is provided the enoyl reductase pyiC. Reduction by the hydrolyase pyiE leads to 1,5-dihydropyrrolone, which is substrate for dehydration and intra-molecular Diels-Alder cyclization by the Diels-Alderase pyiF to yield the required isoindolone-fused macrocycle. The tailoring cytochrome P450 monooxygenases piyD and piyG catalyze the hydroxylation at C-18 and C-7, respectivily, whereas the short-chain dehydrogenase/reductase pyiH reduces the carbonyl at C-21 in preparation for the transfer of an acetyl group by the acetyltransferase pyiB. These 3 reactions whose order is not clear yet, lead to the production of O-methylpyrichalasin J, a deacetylated pyrichalasin H. Finally, pyiB to converts O-methylpyrichalasin J into the final product pyrichalasin H via acetylation of C-21. This chain is Pyrichalasin C-18 hydroxylase, found in Pyricularia grisea (Crabgrass-specific blast fungus).